A 409-amino-acid polypeptide reads, in one-letter code: MARAKFERTKPHANIGTIGHVDHGKTTLTAAITTVLAKAGMAKARAYADIDAAPEEKARGITINTAHVEYETGNRHYAHVDCPGHADYVKNMITGAAQMDGAILVVSAADGPMPQTREHILLAKQVGVPNIVVFLNKEDMVDDAELLELVELEVRELLSSYDFPGDDIPIVAGSALQALEAIQGGASGQKGDNPWVDKILKLMEEVDAYIPTPEREVDRPFLMAVEDVFTITGRGTVATGRIERGSVKVGETIEIVGLRDTRSTTVTGVEMFQKTLDEGLAGDNVGLLLRGIQKTDIERGMVLAKPGSITPHTKFESEVYVLKKEEGGRHTPFFPGYRPQFYVRTTDVTGAISDFTADDGSAAEMVIPGDRIKMTVELINPIAIEQGMRFAIREGGRTIGAGVVSKILQ.

The tr-type G domain occupies 10 to 214; sequence KPHANIGTIG…EVDAYIPTPE (205 aa). Residues 19–26 are G1; it reads GHVDHGKT. 19-26 is a binding site for GTP; it reads GHVDHGKT. Residue Thr-26 participates in Mg(2+) binding. The interval 60–64 is G2; that stretch reads GITIN. Positions 81–84 are G3; it reads DCPG. Residues 81–85 and 136–139 contribute to the GTP site; these read DCPGH and NKED. The G4 stretch occupies residues 136–139; it reads NKED. Residues 174-176 are G5; sequence SAL.

It belongs to the TRAFAC class translation factor GTPase superfamily. Classic translation factor GTPase family. EF-Tu/EF-1A subfamily. In terms of assembly, monomer.

Its subcellular location is the cytoplasm. The catalysed reaction is GTP + H2O = GDP + phosphate + H(+). In terms of biological role, GTP hydrolase that promotes the GTP-dependent binding of aminoacyl-tRNA to the A-site of ribosomes during protein biosynthesis. The chain is Elongation factor Tu from Synechococcus elongatus (strain ATCC 33912 / PCC 7942 / FACHB-805) (Anacystis nidulans R2).